We begin with the raw amino-acid sequence, 477 residues long: Xylose isomerase (477 aa).

The active site involves His-142. 7 residues coordinate Mn(2+): Glu-273, Glu-309, His-312, Asp-337, Asp-348, Asp-350, and Asp-380.

Belongs to the xylose isomerase family. Mn(2+) serves as cofactor.

It carries out the reaction alpha-D-xylose = alpha-D-xylulofuranose. This is Xylose isomerase (XYLA) from Arabidopsis thaliana (Mouse-ear cress).